Here is a 403-residue protein sequence, read N- to C-terminus: Zinc metalloproteinase nas-8 (403 aa).

A signal peptide spans 1 to 29 (MRRNDLLNNKITIFLSSLSLFVIIIPIYA). A propeptide spanning residues 30–111 (AEKDLLPPST…DPKNSESLRR (82 aa)) is cleaved from the precursor. One can recognise a Peptidase M12A domain in the interval 112–307 (NGVITGTRKW…LKMNLMYQCS (196 aa)). Disulfide bonds link Cys-154-Cys-306, Cys-176-Cys-195, Cys-338-Cys-372, Cys-345-Cys-365, and Cys-352-Cys-369. His-203 lines the Zn(2+) pocket. Glu-204 is an active-site residue. Zn(2+)-binding residues include His-207 and His-213. The ShKT domain maps to 338-372 (CRDRTNLCWRWIDRCKSFFFEQIMKEFCSLSCGYC). An N-linked (GlcNAc...) asparagine glycan is attached at Asn-386.

Requires Zn(2+) as cofactor.

Its subcellular location is the secreted. The catalysed reaction is Hydrolysis of peptide bonds in substrates containing five or more amino acids, preferentially with Ala in P1', and Pro in P2'.. Its function is as follows. Metalloprotease. In Caenorhabditis elegans, this protein is Zinc metalloproteinase nas-8 (nas-8).